A 368-amino-acid chain; its full sequence is Phosphate acyltransferase (368 aa).

Positions V335–A368 are disordered.

This sequence belongs to the PlsX family. In terms of assembly, homodimer. Probably interacts with PlsY.

It localises to the cytoplasm. The catalysed reaction is a fatty acyl-[ACP] + phosphate = an acyl phosphate + holo-[ACP]. Its pathway is lipid metabolism; phospholipid metabolism. Catalyzes the reversible formation of acyl-phosphate (acyl-PO(4)) from acyl-[acyl-carrier-protein] (acyl-ACP). This enzyme utilizes acyl-ACP as fatty acyl donor, but not acyl-CoA. The sequence is that of Phosphate acyltransferase from Burkholderia vietnamiensis (strain G4 / LMG 22486) (Burkholderia cepacia (strain R1808)).